Consider the following 176-residue polypeptide: Nutrient stress-induced DNA-binding protein (176 aa).

The protein belongs to the Dps family. As to quaternary structure, hexamer.

Involved in protection of chromosomal DNA from damage under nutrient-limited and oxidative stress conditions. Binds heme. The protein is Nutrient stress-induced DNA-binding protein (dpsA) of Synechococcus sp. (strain ATCC 27144 / PCC 6301 / SAUG 1402/1) (Anacystis nidulans).